Consider the following 279-residue polypeptide: Phosphonates import ATP-binding protein PhnC 2 (279 aa).

An ABC transporter domain is found at 10-253 (LSLKGVSVRY…VARNLYAKQS (244 aa)). 43–50 (GASGAGKS) lines the ATP pocket. Residues 253-262 (SNASNTSAST) are compositionally biased toward low complexity. A disordered region spans residues 253–279 (SNASNTSASTDSPRTLQSSQTKELLPC). Residues 263-279 (DSPRTLQSSQTKELLPC) show a composition bias toward polar residues.

The protein belongs to the ABC transporter superfamily. Phosphonates importer (TC 3.A.1.9.1) family. The complex is composed of two ATP-binding proteins (PhnC), two transmembrane proteins (PhnE) and a solute-binding protein (PhnD).

It localises to the cell inner membrane. The catalysed reaction is phosphonate(out) + ATP + H2O = phosphonate(in) + ADP + phosphate + H(+). In terms of biological role, part of the ABC transporter complex PhnCDE involved in phosphonates import. Responsible for energy coupling to the transport system. The protein is Phosphonates import ATP-binding protein PhnC 2 of Cupriavidus metallidurans (strain ATCC 43123 / DSM 2839 / NBRC 102507 / CH34) (Ralstonia metallidurans).